The sequence spans 60 residues: Large ribosomal subunit protein bL32 (60 aa).

The segment at 1 to 28 is disordered; that stretch reads MAVQQNKKSRSARDMRRSHDALEASTLS. The span at 11–22 shows a compositional bias: basic and acidic residues; it reads SARDMRRSHDAL.

The protein belongs to the bacterial ribosomal protein bL32 family.

This chain is Large ribosomal subunit protein bL32, found in Pseudomonas savastanoi pv. phaseolicola (strain 1448A / Race 6) (Pseudomonas syringae pv. phaseolicola (strain 1448A / Race 6)).